The sequence spans 344 residues: L-rhamnose-proton symporter (344 aa).

10 helical membrane passes run 4-24, 38-58, 68-88, 101-121, 137-157, 175-195, 214-234, 259-279, 290-310, and 323-343; these read AITMGIFWHLIGAASAACFYA, WSVGGIVSWIILPWAISALLL, FSLSTLLPVFLFGAMWGIGNI, MGIGIAIGITLIVGTLMTPII, TLLGVLVALIGVGIVTRAGQL, LVLAVMCGIFSAGMSFAMNAA, LPSYVVIMGGGAIINLGFCFI, VLLSALGGLMWYLQFFFYAWG, ISWMLHMSFYVLCGGIVGLVL, and VLSLGCVVIIVAANIVGIGMA.

It belongs to the L-rhamnose transporter (TC 2.A.7.6) family.

It localises to the cell inner membrane. The catalysed reaction is L-rhamnopyranose(in) + H(+)(in) = L-rhamnopyranose(out) + H(+)(out). Uptake of L-rhamnose across the cytoplasmic membrane with the concomitant transport of protons into the cell (symport system). This Shigella dysenteriae serotype 1 (strain Sd197) protein is L-rhamnose-proton symporter.